We begin with the raw amino-acid sequence, 370 residues long: tRNA-specific 2-thiouridylase MnmA (370 aa).

ATP-binding positions include 8 to 15 and M34; that span reads GMSGGVDS. The segment at 104 to 106 is interaction with target base in tRNA; that stretch reads NPD. C109 (nucleophile) is an active-site residue. C109 and C202 are disulfide-bonded. G134 contributes to the ATP binding site. Residues 152–154 form an interaction with tRNA region; the sequence is KDQ. C202 serves as the catalytic Cysteine persulfide intermediate. An interaction with tRNA region spans residues 309–310; sequence RY.

Belongs to the MnmA/TRMU family.

Its subcellular location is the cytoplasm. It catalyses the reaction S-sulfanyl-L-cysteinyl-[protein] + uridine(34) in tRNA + AH2 + ATP = 2-thiouridine(34) in tRNA + L-cysteinyl-[protein] + A + AMP + diphosphate + H(+). Functionally, catalyzes the 2-thiolation of uridine at the wobble position (U34) of tRNA, leading to the formation of s(2)U34. This is tRNA-specific 2-thiouridylase MnmA from Metamycoplasma arthritidis (strain 158L3-1) (Mycoplasma arthritidis).